Consider the following 286-residue polypeptide: Thiazole synthase (286 aa).

Residue lysine 122 is the Schiff-base intermediate with DXP of the active site. 1-deoxy-D-xylulose 5-phosphate contacts are provided by residues glycine 183, 209 to 210 (AG), and 231 to 232 (NT).

Belongs to the ThiG family. Homotetramer. Forms heterodimers with either ThiH or ThiS.

The protein resides in the cytoplasm. It catalyses the reaction [ThiS sulfur-carrier protein]-C-terminal-Gly-aminoethanethioate + 2-iminoacetate + 1-deoxy-D-xylulose 5-phosphate = [ThiS sulfur-carrier protein]-C-terminal Gly-Gly + 2-[(2R,5Z)-2-carboxy-4-methylthiazol-5(2H)-ylidene]ethyl phosphate + 2 H2O + H(+). Its pathway is cofactor biosynthesis; thiamine diphosphate biosynthesis. Its function is as follows. Catalyzes the rearrangement of 1-deoxy-D-xylulose 5-phosphate (DXP) to produce the thiazole phosphate moiety of thiamine. Sulfur is provided by the thiocarboxylate moiety of the carrier protein ThiS. In vitro, sulfur can be provided by H(2)S. This Synechococcus elongatus (strain ATCC 33912 / PCC 7942 / FACHB-805) (Anacystis nidulans R2) protein is Thiazole synthase.